The primary structure comprises 297 residues: Formamidopyrimidine-DNA glycosylase (297 aa).

Residue Pro2 is the Schiff-base intermediate with DNA of the active site. Glu3 serves as the catalytic Proton donor. The active-site Proton donor; for beta-elimination activity is the Lys58. 3 residues coordinate DNA: His106, Arg133, and Arg178. An FPG-type zinc finger spans residues 263 to 297 (FVYDRAGEPCRICGTPIRQILQGQRSTFYCPHCQH). Arg287 acts as the Proton donor; for delta-elimination activity in catalysis.

Belongs to the FPG family. As to quaternary structure, monomer. Zn(2+) is required as a cofactor.

The enzyme catalyses Hydrolysis of DNA containing ring-opened 7-methylguanine residues, releasing 2,6-diamino-4-hydroxy-5-(N-methyl)formamidopyrimidine.. It carries out the reaction 2'-deoxyribonucleotide-(2'-deoxyribose 5'-phosphate)-2'-deoxyribonucleotide-DNA = a 3'-end 2'-deoxyribonucleotide-(2,3-dehydro-2,3-deoxyribose 5'-phosphate)-DNA + a 5'-end 5'-phospho-2'-deoxyribonucleoside-DNA + H(+). In terms of biological role, involved in base excision repair of DNA damaged by oxidation or by mutagenic agents. Acts as a DNA glycosylase that recognizes and removes damaged bases. Has a preference for oxidized purines, such as 7,8-dihydro-8-oxoguanine (8-oxoG). Has AP (apurinic/apyrimidinic) lyase activity and introduces nicks in the DNA strand. Cleaves the DNA backbone by beta-delta elimination to generate a single-strand break at the site of the removed base with both 3'- and 5'-phosphates. In Cupriavidus metallidurans (strain ATCC 43123 / DSM 2839 / NBRC 102507 / CH34) (Ralstonia metallidurans), this protein is Formamidopyrimidine-DNA glycosylase.